The primary structure comprises 386 residues: Succinate--CoA ligase [ADP-forming] subunit beta (386 aa).

An ATP-grasp domain is found at 9–244 (KDLLASYDVP…PSQENVRDVL (236 aa)). ATP contacts are provided by residues Lys46, 53 to 55 (GRG), Val102, and Glu107. Mg(2+) is bound by residues Asn199 and Asp213. Substrate is bound by residues Asn264 and 321-323 (GIM).

Belongs to the succinate/malate CoA ligase beta subunit family. In terms of assembly, heterotetramer of two alpha and two beta subunits. Mg(2+) is required as a cofactor.

The catalysed reaction is succinate + ATP + CoA = succinyl-CoA + ADP + phosphate. It carries out the reaction GTP + succinate + CoA = succinyl-CoA + GDP + phosphate. It participates in carbohydrate metabolism; tricarboxylic acid cycle; succinate from succinyl-CoA (ligase route): step 1/1. Its function is as follows. Succinyl-CoA synthetase functions in the citric acid cycle (TCA), coupling the hydrolysis of succinyl-CoA to the synthesis of either ATP or GTP and thus represents the only step of substrate-level phosphorylation in the TCA. The beta subunit provides nucleotide specificity of the enzyme and binds the substrate succinate, while the binding sites for coenzyme A and phosphate are found in the alpha subunit. In Chlamydia pneumoniae (Chlamydophila pneumoniae), this protein is Succinate--CoA ligase [ADP-forming] subunit beta.